A 320-amino-acid polypeptide reads, in one-letter code: Ferrochelatase (320 aa).

2 residues coordinate Fe cation: His194 and Glu275.

It belongs to the ferrochelatase family. As to quaternary structure, monomer.

The protein localises to the cytoplasm. It carries out the reaction heme b + 2 H(+) = protoporphyrin IX + Fe(2+). Its pathway is porphyrin-containing compound metabolism; protoheme biosynthesis; protoheme from protoporphyrin-IX: step 1/1. Functionally, catalyzes the ferrous insertion into protoporphyrin IX. In Escherichia coli O127:H6 (strain E2348/69 / EPEC), this protein is Ferrochelatase.